A 204-amino-acid chain; its full sequence is Urease accessory protein UreG (204 aa).

11–18 is a binding site for GTP; it reads GPVGAGKH.

This sequence belongs to the SIMIBI class G3E GTPase family. UreG subfamily. In terms of assembly, homodimer. UreD, UreF and UreG form a complex that acts as a GTP-hydrolysis-dependent molecular chaperone, activating the urease apoprotein by helping to assemble the nickel containing metallocenter of UreC. The UreE protein probably delivers the nickel.

The protein resides in the cytoplasm. Facilitates the functional incorporation of the urease nickel metallocenter. This process requires GTP hydrolysis, probably effectuated by UreG. The chain is Urease accessory protein UreG from Staphylococcus xylosus.